The sequence spans 442 residues: MAAQASEELEKLKLNGQNGHAQEQVSAADEAADNDDSEDDEKEEEGGAEGAATGAAKKKKKRKPKKKKKGGAKKQSSPPRVPISELFPNNQYPEGEIVEYKDENNYRTTNEEKRYLDRMNNDFLQEYRHGAEVHRQVRQYAQKNIKPGQTLTEIAEGIEDAVRALTGHQGLEEGDNIKGGMGFPCGLSINHCAAHYTPNAGNKMVLQQGDVMKVDFGAHINGRIVDSAFTMTFDPVYDNLLAAVKDATNTGIREAGIDVRMSDIGAAIQEAMESYEVEINGTTYPVKAIRNLNGHNIEQHIIHGGKSVPIVKGGDQTKMEEGEVFAIETFGSTGKGYVRDDMETSHYAKVSNAPSVSLRLSSAKNLLNVINKNFGTLPFCRRYLDRLGQDKYLLGLNNLVSAGIIQDYPPLCDIKGSYTAQYEHTIVLRPTVKEIISRGDDY.

The interval 1 to 92 (MAAQASEELE…ISELFPNNQY (92 aa)) is disordered. The segment covering 15 to 25 (NGQNGHAQEQV) has biased composition (polar residues). Positions 30–47 (EAADNDDSEDDEKEEEGG) are enriched in acidic residues. A compositionally biased stretch (basic residues) spans 56 to 72 (AKKKKKRKPKKKKKGGA). His195 lines the substrate pocket. A divalent metal cation-binding residues include Asp215, Asp226, and His295. Position 303 (His303) interacts with substrate. Residues Glu328 and Glu423 each coordinate a divalent metal cation.

The protein belongs to the peptidase M24A family. Methionine aminopeptidase eukaryotic type 2 subfamily. Co(2+) serves as cofactor. The cofactor is Zn(2+). Requires Mn(2+) as cofactor. Fe(2+) is required as a cofactor.

It localises to the cytoplasm. The catalysed reaction is Release of N-terminal amino acids, preferentially methionine, from peptides and arylamides.. Cotranslationally removes the N-terminal methionine from nascent proteins. The N-terminal methionine is often cleaved when the second residue in the primary sequence is small and uncharged (Met-Ala-, Cys, Gly, Pro, Ser, Thr, or Val). In Talaromyces marneffei (strain ATCC 18224 / CBS 334.59 / QM 7333) (Penicillium marneffei), this protein is Methionine aminopeptidase 2-1.